The chain runs to 602 residues: Pentatricopeptide repeat-containing protein At5g11310, mitochondrial (602 aa).

Residues 1-35 (MNSLFTAFRRNLLLNPNPHRNFFLHRLLSSSRRSS) constitute a mitochondrion transit peptide. 11 PPR repeats span residues 134–165 (SPSL…VRSD), 172–202 (SADT…ARSY), 211–241 (ELRL…IGGT), 249–283 (SVRI…NVKP), 284–318 (TVVT…EMEI), 319–353 (NFMV…ESGP), 354–388 (TIVT…GVDP), 389–423 (TTTT…GHSP), 424–458 (DRLT…GIDP), 459–493 (DLLT…GIIP), and 494–528 (QYIT…PHSK).

It belongs to the PPR family. P subfamily.

The protein resides in the mitochondrion. The protein is Pentatricopeptide repeat-containing protein At5g11310, mitochondrial of Arabidopsis thaliana (Mouse-ear cress).